Consider the following 234-residue polypeptide: Small ribosomal subunit protein uS2c (234 aa).

Belongs to the universal ribosomal protein uS2 family.

Its subcellular location is the plastid. The protein localises to the chloroplast. This chain is Small ribosomal subunit protein uS2c (rps2), found in Pinus koraiensis (Korean pine).